The following is a 388-amino-acid chain: Sporulation-specific mitogen-activated protein kinase SMK1 (388 aa).

The 300-residue stretch at 38–337 (YEIIQFLGKG…VEQAISHPFL (300 aa)) folds into the Protein kinase domain. Residues 44 to 52 (LGKGAYGTV) and Lys69 contribute to the ATP site. Asp166 (proton acceptor) is an active-site residue. The short motif at 207–209 (TNY) is the TXY element.

It belongs to the protein kinase superfamily. CMGC Ser/Thr protein kinase family. MAP kinase subfamily. Interacts with GSC2. Requires Mg(2+) as cofactor. Dually phosphorylated on Thr-207 and Tyr-209, which activates the enzyme.

The enzyme catalyses L-seryl-[protein] + ATP = O-phospho-L-seryl-[protein] + ADP + H(+). It carries out the reaction L-threonyl-[protein] + ATP = O-phospho-L-threonyl-[protein] + ADP + H(+). Its activity is regulated as follows. Activated by tyrosine and threonine phosphorylation. Required for spore wall assembly. Required for proper deposition of the two outer layers of the spore wall, the chitosan and dityrosine layers. Negatively regulates GSC2, an alternate catalytic subunit of the 1,3-beta-glucan synthase (GS). Participates in a developmentally regulated signal transduction pathway that coordinates cytodifferentiation events with the transcriptional program. This Saccharomyces cerevisiae (strain ATCC 204508 / S288c) (Baker's yeast) protein is Sporulation-specific mitogen-activated protein kinase SMK1 (SMK1).